A 477-amino-acid chain; its full sequence is Argininosuccinate lyase (477 aa).

This sequence belongs to the lyase 1 family. Argininosuccinate lyase subfamily.

The protein localises to the cytoplasm. The enzyme catalyses 2-(N(omega)-L-arginino)succinate = fumarate + L-arginine. Its pathway is amino-acid biosynthesis; L-arginine biosynthesis; L-arginine from L-ornithine and carbamoyl phosphate: step 3/3. The polypeptide is Argininosuccinate lyase (Corynebacterium diphtheriae (strain ATCC 700971 / NCTC 13129 / Biotype gravis)).